The following is a 217-amino-acid chain: Ran-binding protein 1 homolog b (217 aa).

2 disordered regions span residues 1–32 and 160–217; these read MASI…QVAP and ESEE…VPSA. A2 is subject to N-acetylalanine. Over residues 14–26 the composition is skewed to acidic residues; it reads DEEETGANEDEDT. In terms of domain architecture, RanBD1 spans 29-164; the sequence is QVAPIVRLEE…FKEVAESEEE (136 aa). Positions 181 to 217 are enriched in basic and acidic residues; sequence LTVEEKESEKKPVEKAEENKKSEAVEEKKTEESVPSA.

In terms of assembly, interacts with the GTP-bound form of RAN1, RAN2 and RAN3.

The protein resides in the nucleus. Its subcellular location is the nuclear pore complex. The protein is Ran-binding protein 1 homolog b (RANBP1B) of Arabidopsis thaliana (Mouse-ear cress).